The primary structure comprises 811 residues: DEP domain-containing protein 1A (811 aa).

One can recognise a DEP domain in the interval 24–108; sequence FRAGMPLRKH…DNNQLFRFPA (85 aa). The Rho-GAP domain maps to 281–321; sequence DYFLDLPEPLLTFEYYELFVNILVVCGYITVSDRSSGIHKI. Position 512 is a phosphoserine (Ser-512). Positions 598–653 are interaction with ZNF224; it reads AIDALQLCCLLLPPPNRRKLQLLMRMISRMSQNVDMPKLHDAMGTRSLMIHTFSRC.

Isoform 2 and isoform 5 can form homodimers and heterodimers. Interacts with ZNF224. As to expression, expressed in testis. Up-regulated in bladder cancer cells (at protein level).

The protein resides in the nucleus. Functionally, may be involved in transcriptional regulation as a transcriptional corepressor. The DEPDC1A-ZNF224 complex may play a critical role in bladder carcinogenesis by repressing the transcription of the A20 gene, leading to transport of NF-KB protein into the nucleus, resulting in suppression of apoptosis of bladder cancer cells. The polypeptide is DEP domain-containing protein 1A (DEPDC1) (Homo sapiens (Human)).